An 809-amino-acid chain; its full sequence is Transitional endoplasmic reticulum ATPase homolog 1 (809 aa).

The interval 1–21 (MASVPTHQSEKEKKNDELSTA) is disordered. Basic and acidic residues predominate over residues 8–21 (QSEKEKKNDELSTA). Residues 253–259 (PGTGKTL), Asn-354, His-390, and 527–532 (GCGKTL) each bind ATP. The tract at residues 779 to 809 (FGNNFKFPGEQRGSDAPSAPVPAQDDDDLYN) is disordered. The interval 803 to 809 (DDDDLYN) is interaction with ufd-2.

Belongs to the AAA ATPase family. CDC48 subfamily. As to quaternary structure, homohexamer; oligomerization is ATP-independent. Forms a ring-shaped particle of 18.3 nm diameter, that displays 6-fold radial symmetry. Interacts with cdc-48.2 and thus may form heterohexamers. Forms a complex composed of cdc-48.1, him-6 and crp-1; within the complex, interacts with helicase him-6 and GTPase crp-1. Forms a complex composed of deubiquitinating enzyme atx-3, adapter ubxn-5 and cdc-48.1; within the complex, interacts (via N-terminus) with ubxn-5 and with atx-3. Forms a complex composed of deubiquitinating enzyme atx-3, E4 ubiquitin-protein ligase ufd-2 and cdc-48.1; within the complex, interacts with atx-3 and (via DDDLYN motif) with ufd-2. Interacts (via N-terminus) with atx-3 (via RRDR motif); the interaction is not required for atx-3 enzymatic activity. Forms a complex composed of cdc-48.1, myosin chaperone unc-45, ubiquitin-protein ligases ufd-2 and chn-1; within the complex, interacts (via DDDLYN motif) with ufd-2 and targets myosin chaperone unc-45 for proteasomal degradation. Forms a complex composed of ubxn-3, ufd-1, npl-4.1 and cdc-48.1; within the complex, interacts (via N-terminus) with ubxn-3 (via FPK motif) and with ufd-1. Forms a complex composed of ubxn-3, cdc-48.1 and/or cdc-48.2 and substrate cdt-1. Interacts (via N-terminus) with ubxn-1. Interacts (via N-terminus) with ubxn-2. Interacts (via N-terminus) with ubxn-4. Interacts with ubxn-6. Interacts with ufd-3. Does not interact with air-2. In terms of tissue distribution, expressed in germ cells and spermatheca. Expressed in body wall muscles.

The protein resides in the cytoplasm. It localises to the perinuclear region. The enzyme catalyses ATP + H2O = ADP + phosphate + H(+). The first ATP-binding region has low ATPase activity. The second ATP-binding region is responsible for ATPase activity. ATP binding to the first ATP-binding region induces intrinsic activity of the second ATP-binding region. While ATP binding to the first ATP-binding region appears to prevent ATP hydrolysis by the second ATP-binding region, ADP-binding to first region promotes the coordinate and cooperative ATPase cycle of the second ATP-binding region. ATP binding to the first ATP-binding region induces a conformational change, promoting the rotation of the first ATP-binding region relative to the second ATP-binding region in the hexamer. Inhibited by N-ethylmaleimide (NEM). Its function is as follows. ATP-dependent chaperone which probably uses the energy provided by ATP hydrolysis to generate mechanical force to unfold substrate proteins, disassemble protein complexes, and disaggregate protein aggregates. Can also prevent aggregation of unfolded proteins also in an ATP-independent manner. Targets polyubiquitinated proteins for proteasomal degradation by binding to 'Lys-48'-linked polyubiquitin chains. Involved in the cytoplasmic elimination of misfolded proteins exported from the ER. This pathway, known as ERAD, prevents the activation of the unfolded protein response (UPR) caused by the accumulation of misfolded proteins in the ER. In association with helicase him-6 and GTPase crp-1, regulates the unfolded protein response (UPR) following ER stress, probably independently of the ERAD pathway. Together with udf-2 and chn-1, regulates myosin assembly in body wall muscles by targeting myosin chaperone unc-45 for proteasomal degradation. Together with the ufd-1-npl-4 complex, controls the switch from spermatogenesis to oogenesis by regulating E3 ligase cul-2 complex-mediated tra-1 proteasomal degradation. During oocyte meiosis and together with cdc-48.2, required for chromosome condensation at the diakinesis phase in prophase I and for progression of metaphase I. During the first embryonic cell division, regulates DNA replication and thus chromosome segregation and decondensation, and nuclear envelope re-assembly. In S phase and in association with ufd-1, npl-4.1 and/or npl-4.2 and ubxn-3, ensures the degradation of DNA licensing factor cdt-1 after the initiation of DNA replication and thus the disassembly of the DNA replication CMG helicase complex by promoting the dissociation from chromatin of several of its components including cdc-45 and sld-5. Regulates ubxn-3 nuclear localization during S phase. During the first embryonic cell divisions and together with cdc-48.2, regulates the re-assembly of the nuclear envelope after mitosis possibly by inactivating kinase air-2, a component of the chromosomal passenger complex (CPC). However, in another study, cdc-48.1 does not appear to be implicated in the regulation of air-2. This Caenorhabditis elegans protein is Transitional endoplasmic reticulum ATPase homolog 1.